Consider the following 1234-residue polypeptide: MKEEVKGIPVRVALRCRPLVPKEISEGCQMCLSFVPGETQVVVGTDKSFTYDFVFDPCTEQEEVFNKAVAPLIKGIFKGYNATVLAYGQTGSGKTYSMGGAYTAEQENEPTVGIIPRVIQLLFKEIDKKSDFEFTLKVSYLEIYNEEILDLLCPSREKAQINIREDPKEGIKIVGLTEKTVLVALDTVSCLEQGNNSRTVASTAMNSQSSRSHAIFTISIEQRKKSDKNCSFRSKLHLVDLAGSERQKKTKAEGDRLKEGININRGLLCLGNVISALGDDKKGSFVPYRDSKLTRLLQDSLGGNSHTLMIACVSPADSNLEETLSTLRYADRARKIKNKPIVNIDPHTAELNHLKQQVQQLQVLLLQAHGGTLPGSINAEPSENLQSLMEKNQSLVEENEKLSRCLSKAAGQTAQMLERIILTEQVNEKLNAKLEELRQHVACKLDLQKLVETLEDQELKENVEIICNLQQLITQLSDETVACTAAAIDTAVEEEAQVETSPETSRSSDAFTTQHALHQAQMSKEVVELNNALALKEALVRKMTQNDNQLQPIQFQYQDNIKNLELEVINLQKEKEELVRELQTAKKNVNQAKLSEHRHKLLQELEGQIADLKKKLNEQSKLLKLKESTERTVSKLNQEIWMMKNQRVQLMRQMKEDAEKFRQWKQKKDKEVIQLKERDRKRQYELLKLERNFQKQSSVLRRKTEEAAAANKRLKDALQKQREVTDKRKETQSHGKEGIAARVRNWLGNEIEVMVSTEEAKRHLNDLLEDRKILAQDVVQLKEKKESRENPPPKLRKCTFSLSEVHGQVLESEDCITKQIESLETEMELRSAQIADLQQKLLDAESEDRPKQCWENIATILEAKCALKYLIGELVSSKIHVTKLENSLRQSKASCADMQKMLFEEQNHFSEIETELQAELVRMEQQHQEKVLYLVSQLQESQMAEKQLEKSASEKEQQLVSTLQCQDEELEKMREVCEQNQQLLQENEIIKQKLILLQVASRQKHLPNDTLLSPDSSFEYIPPKPKPSRVKEKFLEQSMDIEDLKYCSEHSVNEHEDGDGDGDSDEGDDEEWKPTKLVKVSRKNIQGCSCKGWCGNKQCGCRKQKSDCGVDCSCDPTKCRNRQQGKDSLGTVEQTQDSEGSFKLEDPTEVTPGLSFFNPVCATPNSKILKEMCDMEQVLSKKTAPAPSPFDLPESKHGATEYQQNKPPGKKKKRALASNTSFFSGCSPIEEEAH.

Residues 9-336 (PVRVALRCRP…LRYADRARKI (328 aa)) form the Kinesin motor domain. Residue 88–95 (GQTGSGKT) participates in ATP binding. Residues 350–999 (ELNHLKQQVQ…IKQKLILLQV (650 aa)) are a coiled coil. S394 is subject to Phosphoserine. Disordered regions lie at residues 494-513 (EEAQ…AFTT) and 712-737 (KRLK…HGKE). Residues 498-513 (VETSPETSRSSDAFTT) are compositionally biased toward polar residues. The segment at 663 to 1234 (QWKQKKDKEV…GCSPIEEEAH (572 aa)) is interaction with PRC1. Positions 713–737 (RLKDALQKQREVTDKRKETQSHGKE) are enriched in basic and acidic residues. Positions 793–798 (PKLRKC) match the Nuclear localization signal motif. Phosphothreonine is present on T799. Residues S801, S951, S1001, S1013, S1017, and S1028 each carry the phosphoserine modification. Positions 1000 to 1234 (ASRQKHLPND…GCSPIEEEAH (235 aa)) are globular. Disordered regions lie at residues 1007–1030 (PNDT…PSRV), 1052–1076 (VNEH…KPTK), 1122–1143 (RQQG…GSFK), and 1183–1234 (TAPA…EEAH). Positions 1056–1071 (EDGDGDGDSDEGDDEE) are enriched in acidic residues. A CRD; required for [4Fe-4S] cluster binding and localization to the spindle midzone and midbody during anaphase and telophase region spans residues 1086 to 1144 (QGCSCKGWCGNKQCGCRKQKSDCGVDCSCDPTKCRNRQQGKDSLGTVEQTQDSEGSFKL). S1128 carries the phosphoserine modification. T1183 bears the Phosphothreonine mark. At S1188 the chain carries Phosphoserine. A Glycyl lysine isopeptide (Lys-Gly) (interchain with G-Cter in SUMO2) cross-link involves residue K1196. Position 1227 is a phosphoserine (S1227).

This sequence belongs to the TRAFAC class myosin-kinesin ATPase superfamily. Kinesin family. Chromokinesin subfamily. [2Fe-2S] cluster is required as a cofactor. The cofactor is [4Fe-4S] cluster. In terms of tissue distribution, specifically expressed in testis.

The protein resides in the nucleus matrix. It localises to the cytoplasm. It is found in the cytoskeleton. Its function is as follows. Iron-sulfur (Fe-S) cluster binding motor protein that has a role in chromosome segregation during mitosis. Translocates PRC1 to the plus ends of interdigitating spindle microtubules during the metaphase to anaphase transition, an essential step for the formation of an organized central spindle midzone and midbody and for successful cytokinesis. May play a role in mitotic chromosomal positioning and bipolar spindle stabilization. In Homo sapiens (Human), this protein is Chromosome-associated kinesin KIF4B (KIF4B).